A 409-amino-acid chain; its full sequence is Elongation factor Tu, chloroplastic (409 aa).

In terms of domain architecture, tr-type G spans 10 to 214 (KPHVNIGTIG…AVDAYIPTPE (205 aa)). Positions 19–26 (GHVDHGKT) are G1. Residue 19-26 (GHVDHGKT) coordinates GTP. A Mg(2+)-binding site is contributed by T26. The tract at residues 60-64 (GITIN) is G2. The interval 81-84 (DCPG) is G3. Residues 81 to 85 (DCPGH) and 136 to 139 (NKQD) each bind GTP. Positions 136–139 (NKQD) are G4. The interval 174 to 176 (SAL) is G5.

Belongs to the TRAFAC class translation factor GTPase superfamily. Classic translation factor GTPase family. EF-Tu/EF-1A subfamily.

The protein localises to the plastid. The protein resides in the chloroplast. It catalyses the reaction GTP + H2O = GDP + phosphate + H(+). Its function is as follows. GTP hydrolase that promotes the GTP-dependent binding of aminoacyl-tRNA to the A-site of ribosomes during protein biosynthesis. The sequence is that of Elongation factor Tu, chloroplastic (tufA) from Thalassiosira pseudonana (Marine diatom).